The sequence spans 622 residues: 1-deoxy-D-xylulose-5-phosphate synthase (622 aa).

Thiamine diphosphate contacts are provided by residues His-74 and 115 to 117; that span reads GHS. A Mg(2+)-binding site is contributed by Asp-146. Residues 147 to 148, Asn-177, Phe-285, and Glu-366 contribute to the thiamine diphosphate site; that span reads GA. A Mg(2+)-binding site is contributed by Asn-177.

Belongs to the transketolase family. DXPS subfamily. As to quaternary structure, homodimer. Requires Mg(2+) as cofactor. Thiamine diphosphate serves as cofactor.

It catalyses the reaction D-glyceraldehyde 3-phosphate + pyruvate + H(+) = 1-deoxy-D-xylulose 5-phosphate + CO2. Its pathway is metabolic intermediate biosynthesis; 1-deoxy-D-xylulose 5-phosphate biosynthesis; 1-deoxy-D-xylulose 5-phosphate from D-glyceraldehyde 3-phosphate and pyruvate: step 1/1. In terms of biological role, catalyzes the acyloin condensation reaction between C atoms 2 and 3 of pyruvate and glyceraldehyde 3-phosphate to yield 1-deoxy-D-xylulose-5-phosphate (DXP). The protein is 1-deoxy-D-xylulose-5-phosphate synthase of Magnetococcus marinus (strain ATCC BAA-1437 / JCM 17883 / MC-1).